The primary structure comprises 622 residues: MSTDNKQSLPAITLAAIGVVYGDIGTSPLYTLRECLSGQFGFGVERDAVFGFLSLIFWLLIFVVSIKYLTFVMRADNAGEGGILTLMSLAGRNTSARTTSMLVIMGLIGGSFFYGEVVITPAISVMSAIEGLEIVAPQLDTWIVPLSIIVLTLLFMIQKHGTAMVGKLFAPIMLTWFLILAGLGLRSIIANPEVLHALNPMWAVHFFLEYKTVSFIALGAVVLSITGGEVLYADMGHFGKFSIRLAWFTVVLPSLTLNYFGQGALLLKNPEAIKNPFFLLAPDWALIPLLIIAALATVIASQAVISGVFSLTRQAVRLGYLSPMRIIHTSEMESGQIYIPFVNWMLYVAVVIVIVSFEHSSNLAAAYGIAVTGTMVLTSILSTTVARQNWHWNKYFVALILIAFLCVDIPLFTANLDKLLSGGWLPLSLGTVMFIVMTTWKSERFRLLRRMHEHGNSLEAMIASLEKSPPVRVPGTAVYMSRAINVIPFALMHNLKHNKVLHERVILLTLRTEDAPYVHNVRRVQIEQLSPTFWRVVASYGWRETPNVEEVFHRCGLEGLSCRMMETSFFMSHESLILGKRPWYLRLRGKLYLLLQRNALRAPDQFEIPPNRVIELGTQVEI.

A run of 12 helical transmembrane segments spans residues 9–29 (LPAI…TSPL), 49–69 (VFGF…IKYL), 103–123 (VIMG…TPAI), 137–157 (PQLD…LFMI), 165–185 (VGKL…GLGL), 213–233 (VSFI…VLYA), 247–267 (WFTV…ALLL), 276–296 (PFFL…AALA), 337–357 (IYIP…IVSF), 363–383 (LAAA…ILST), 396–416 (FVAL…TANL), and 419–439 (LLSG…VMTT).

It belongs to the HAK/KUP transporter (TC 2.A.72) family.

Its subcellular location is the cell inner membrane. It catalyses the reaction K(+)(in) + H(+)(in) = K(+)(out) + H(+)(out). Functionally, responsible for the low-affinity transport of potassium into the cell. Likely operates as a K(+):H(+) symporter. This is Low affinity potassium transport system protein Kup from Shigella flexneri.